The primary structure comprises 255 residues: NAD kinase (255 aa).

Residue Asp-44 is the Proton acceptor of the active site. Residues 44–45 (DG), His-49, 114–115 (NE), Asp-144, Ala-152, 155–160 (SAYNLS), and Gln-216 each bind NAD(+).

Belongs to the NAD kinase family. A divalent metal cation serves as cofactor.

The protein resides in the cytoplasm. It carries out the reaction NAD(+) + ATP = ADP + NADP(+) + H(+). Functionally, involved in the regulation of the intracellular balance of NAD and NADP, and is a key enzyme in the biosynthesis of NADP. Catalyzes specifically the phosphorylation on 2'-hydroxyl of the adenosine moiety of NAD to yield NADP. The polypeptide is NAD kinase (Rickettsia prowazekii (strain Madrid E)).